A 120-amino-acid polypeptide reads, in one-letter code: Autophagy-related protein 8C (120 aa).

The interval 1–20 (MARSSFKLEHPLERRQAEAN) is disordered. The Phosphatidylethanolamine amidated glycine moiety is linked to residue Gly117. The propeptide at 118-120 (LFV) is removed in mature form.

Belongs to the ATG8 family. As to quaternary structure, interacts with ATG4. The C-terminal 3 residues are removed by ATG4 to expose Gly-117 at the C-terminus. The C-terminal Gly is then amidated with phosphatidylethanolamine by an activating system similar to that for ubiquitin.

The protein localises to the cytoplasmic vesicle. The protein resides in the autophagosome membrane. Its subcellular location is the vacuole membrane. It localises to the cytoplasm. It is found in the cytoskeleton. In terms of biological role, ubiquitin-like modifier involved in autophagosomes formation. May mediate the delivery of the autophagosomes to the vacuole via the microtubule cytoskeleton. This chain is Autophagy-related protein 8C (ATG8C), found in Oryza sativa subsp. indica (Rice).